Here is a 549-residue protein sequence, read N- to C-terminus: Oxygen-dependent choline dehydrogenase (549 aa).

4-33 contributes to the FAD binding site; it reads DFVIIGSGSAGSAMAYRLSEDGRYSVIVIE. His465 (proton acceptor) is an active-site residue.

It belongs to the GMC oxidoreductase family. It depends on FAD as a cofactor.

The enzyme catalyses choline + A = betaine aldehyde + AH2. The catalysed reaction is betaine aldehyde + NAD(+) + H2O = glycine betaine + NADH + 2 H(+). Its pathway is amine and polyamine biosynthesis; betaine biosynthesis via choline pathway; betaine aldehyde from choline (cytochrome c reductase route): step 1/1. Involved in the biosynthesis of the osmoprotectant glycine betaine. Catalyzes the oxidation of choline to betaine aldehyde and betaine aldehyde to glycine betaine at the same rate. The chain is Oxygen-dependent choline dehydrogenase from Brucella canis (strain ATCC 23365 / NCTC 10854 / RM-666).